We begin with the raw amino-acid sequence, 1405 residues long: DNA-directed RNA polymerase subunit beta' (1405 aa).

Zn(2+) is bound by residues C70, C72, C85, and C88. 3 residues coordinate Mg(2+): D460, D462, and D464. Zn(2+) is bound by residues C815, C890, C897, and C900. The segment at 1375–1405 (GLTDSEMETLSGKPAGAEPVAALADAGADEE) is disordered.

This sequence belongs to the RNA polymerase beta' chain family. The RNAP catalytic core consists of 2 alpha, 1 beta, 1 beta' and 1 omega subunit. When a sigma factor is associated with the core the holoenzyme is formed, which can initiate transcription. It depends on Mg(2+) as a cofactor. Zn(2+) serves as cofactor.

The catalysed reaction is RNA(n) + a ribonucleoside 5'-triphosphate = RNA(n+1) + diphosphate. Its function is as follows. DNA-dependent RNA polymerase catalyzes the transcription of DNA into RNA using the four ribonucleoside triphosphates as substrates. The chain is DNA-directed RNA polymerase subunit beta' from Xanthomonas oryzae pv. oryzae (strain MAFF 311018).